The primary structure comprises 453 residues: Phenylalanine-4-hydroxylase (453 aa).

Position 2 is an N-acetylalanine (Ala2). The residue at position 16 (Ser16) is a Phosphoserine; by PKA. One can recognise an ACT domain in the interval 36–114; it reads SLIFSLKEEV…TVHELSRDKE (79 aa). His285, His290, and Glu330 together coordinate Fe cation.

It belongs to the biopterin-dependent aromatic amino acid hydroxylase family. As to quaternary structure, homodimer and homotetramer. The cofactor is Fe(2+). Phosphorylation at Ser-16 increases basal activity and facilitates activation by the substrate phenylalanine.

It catalyses the reaction (6R)-L-erythro-5,6,7,8-tetrahydrobiopterin + L-phenylalanine + O2 = (4aS,6R)-4a-hydroxy-L-erythro-5,6,7,8-tetrahydrobiopterin + L-tyrosine. It participates in amino-acid degradation; L-phenylalanine degradation; acetoacetate and fumarate from L-phenylalanine: step 1/6. N-terminal region of PAH is thought to contain allosteric binding sites for phenylalanine and to constitute an 'inhibitory' domain that regulates the activity of a catalytic domain in the C-terminal portion of the molecule. In terms of biological role, catalyzes the hydroxylation of L-phenylalanine to L-tyrosine. This chain is Phenylalanine-4-hydroxylase (Pah), found in Rattus norvegicus (Rat).